The chain runs to 218 residues: Octanoyltransferase (218 aa).

A BPL/LPL catalytic domain is found at 45–218 (AGTADELWLL…TDALQRAIYS (174 aa)). Residues 84–91 (RGGQITYH), 151–153 (ALG), and 164–166 (GLA) contribute to the substrate site. The Acyl-thioester intermediate role is filled by cysteine 182.

It belongs to the LipB family.

The protein localises to the cytoplasm. It catalyses the reaction octanoyl-[ACP] + L-lysyl-[protein] = N(6)-octanoyl-L-lysyl-[protein] + holo-[ACP] + H(+). The protein operates within protein modification; protein lipoylation via endogenous pathway; protein N(6)-(lipoyl)lysine from octanoyl-[acyl-carrier-protein]: step 1/2. Catalyzes the transfer of endogenously produced octanoic acid from octanoyl-acyl-carrier-protein onto the lipoyl domains of lipoate-dependent enzymes. Lipoyl-ACP can also act as a substrate although octanoyl-ACP is likely to be the physiological substrate. This is Octanoyltransferase from Thiobacillus denitrificans (strain ATCC 25259 / T1).